The chain runs to 495 residues: Cobyric acid synthase (495 aa).

The 195-residue stretch at 249–443 folds into the GATase cobBQ-type domain; the sequence is EININVIRLP…LHGLFDNGAW (195 aa). The active-site Nucleophile is the Cys-330. Residue His-435 is part of the active site.

It belongs to the CobB/CobQ family. CobQ subfamily.

The protein operates within cofactor biosynthesis; adenosylcobalamin biosynthesis. Functionally, catalyzes amidations at positions B, D, E, and G on adenosylcobyrinic A,C-diamide. NH(2) groups are provided by glutamine, and one molecule of ATP is hydrogenolyzed for each amidation. This Gloeothece citriformis (strain PCC 7424) (Cyanothece sp. (strain PCC 7424)) protein is Cobyric acid synthase.